Consider the following 519-residue polypeptide: Dideacetyl fusicoccin A C-19 hydroxylase (519 aa).

Residues 16–36 (LPVAPILFTALAATIGAFLLS) form a helical membrane-spanning segment. Residues N177, N327, N414, and N432 are each glycosylated (N-linked (GlcNAc...) asparagine). Residue C454 participates in heme binding.

It belongs to the cytochrome P450 family. Heme is required as a cofactor.

The protein localises to the membrane. Its pathway is mycotoxin biosynthesis. Its function is as follows. Cytochrome P450 monooxygenase; part of the 2 gene clusters that mediate the biosynthesis of fusicoccins, diterpene glucosides that display phytohormone-like activity and function as potent activators of plasma membrane H(+)-ATPases in plants by modifying 14-3-3 proteins and cause the plant disease constriction canker. The first step in the pathway is performed by the fusicoccadiene synthase PaFS that possesses both prenyl transferase and terpene cyclase activity, converting isopentenyl diphosphate and dimethylallyl diphosphate into geranylgeranyl diphosphate (GGDP) and successively converting GGDP into fusicocca-2,10(14)-diene, a precursor for fusicoccin H. The second step is the oxidation at the C-8 position by the cytochrome P450 monooxygenase PaP450-2 to yield fusicocca-2,10(14)-diene-8-beta-ol. The cytochrome P450 monooxygenase PaP450-1 then catalyzes the hydroxylation at the C-16 position to produce fusicocca-2,10(14)-diene-8-beta,16-diol. The dioxygenase fc-dox then catalyzes the 16-oxydation of fusicocca-2,10(14)-diene-8-beta,16-diol to yield an aldehyde (8-beta-hydroxyfusicocca-1,10(14)-dien-16-al). The short-chain dehydrogenase/reductase fc-sdr catalyzes the reduction of the aldehyde to yield fusicocca-1,10(14)-diene-8-beta,16-diol. The next step is the hydroxylation at C-9 performed by the cytochrome P450 monooxygenase PaP450-3 that leads to fusicoccin H aglycon which is glycosylated to fusicoccin H by the O-glycosyltransferase PaGT. Hydroxylation at C-12 by the cytochrome P450 monooxygenase PaP450-4 leads then to the production of fusicoccin Q and is followed by methylation by the O-methyltransferase PaMT to yield fusicoccin P. Fusicoccin P is further converted to fusicoccin J via prenylation by the O-glucose prenyltransferase PaPT. Cytochrome P450 monooxygenase PaP450-5 then performs hydroxylation at C-19 to yield dideacetyl-fusicoccin A which is acetylated to 3'-O-deacetyl-fusicoccin A by the O-acetyltransferase PaAT-2. Finally, a another acetylation by the O-acetyltransferase PaAT-1 yields fusicoccin A. The polypeptide is Dideacetyl fusicoccin A C-19 hydroxylase (Phomopsis amygdali (Fusicoccum amygdali)).